A 433-amino-acid chain; its full sequence is Hps1-dma1 cluster O-methyltransferase (433 aa).

Residues 36-55 (NGHPERSLNSTDSVRLSDAP) are disordered. Residue aspartate 285 participates in S-adenosyl-L-methionine binding. Catalysis depends on histidine 331, which acts as the Proton acceptor.

The protein belongs to the class I-like SAM-binding methyltransferase superfamily. Cation-independent O-methyltransferase family. COMT subfamily.

Its pathway is secondary metabolite biosynthesis. Functionally, O-methyltransferase; part of the hps1-dma1 gene cluster that probably mediates the biosynthesis a derivative of cyclopiazonic acid (CPA). The hybrid polyketide synthase-nonribosomal peptide synthetase (PKS-NRPS) nps1 might incorporates acetyl-CoA, malonyl-CoA, and tryptophan (Trp) and utilizes a C-terminal redox-incompetent reductase domain to make and release the tryptophan tetramic acid, cyclo-acetoacetyl-L-tryptophan (c-AATrp), as the first intermediate in the pathway. In addition, the cluster also includes the tryptophan dimethylallyltransferase dma1, the FAD-dependent oxidoreductase toxD, the cytochrome P450 monooxygenase cyp3.1 and the methyltransferase DOTSEDRAFT_139328; the latter 2 being not present in all CPA-producing fungi but involved in additional modifications that occur in biosynthesis the of a range of CPA and CPA-like products. Further studies are required to clarify whether the CPA-like hps1-dma1 cluster is functional or a non-functional relic reflecting evolution of D.septosporum. This chain is Hps1-dma1 cluster O-methyltransferase, found in Dothistroma septosporum (strain NZE10 / CBS 128990) (Red band needle blight fungus).